We begin with the raw amino-acid sequence, 587 residues long: 5-aminolevulinate synthase, erythroid-specific, mitochondrial (587 aa).

Residues methionine 1–serine 49 constitute a mitochondrion transit peptide. Arginine 163 provides a ligand contact to succinyl-CoA. The pyridoxal 5'-phosphate site is built by cysteine 258 and phenylalanine 259. Succinyl-CoA-binding residues include serine 280 and lysine 299. Residues serine 332, histidine 360, and threonine 388 each coordinate pyridoxal 5'-phosphate. Residue lysine 391 is part of the active site. Position 391 is an N6-(pyridoxal phosphate)lysine (lysine 391). Threonine 420 and threonine 421 together coordinate pyridoxal 5'-phosphate. Threonine 508 lines the succinyl-CoA pocket.

Belongs to the class-II pyridoxal-phosphate-dependent aminotransferase family. Homodimer. Interacts with SUCLA2. In terms of assembly, interacts with SUCLA2. It depends on pyridoxal 5'-phosphate as a cofactor. Erythroid-specific.

It localises to the mitochondrion inner membrane. The enzyme catalyses succinyl-CoA + glycine + H(+) = 5-aminolevulinate + CO2 + CoA. Its pathway is porphyrin-containing compound metabolism; protoporphyrin-IX biosynthesis; 5-aminolevulinate from glycine: step 1/1. With respect to regulation, down-regulated by itaconyl-CoA which acts as a competitive inhibitor of succinyl-CoA substrate. Its function is as follows. Catalyzes the pyridoxal 5'-phosphate (PLP)-dependent condensation of succinyl-CoA and glycine to form aminolevulinic acid (ALA), with CoA and CO2 as by-products. Contributes significantly to heme formation during erythropoiesis. Functionally, catalyzes the pyridoxal 5'-phosphate (PLP)-dependent condensation of succinyl-CoA and glycine to form aminolevulinic acid (ALA), with CoA and CO2 as by-products. Catalytic activity is 75-85% of isoform 1 activity. Catalyzes the pyridoxal 5'-phosphate (PLP)-dependent condensation of succinyl-CoA and glycine to form aminolevulinic acid (ALA), with CoA and CO2 as by-products. Catalytic activity is 65-75% of isoform 1 activity. This Homo sapiens (Human) protein is 5-aminolevulinate synthase, erythroid-specific, mitochondrial.